Here is a 506-residue protein sequence, read N- to C-terminus: Dolabradiene monooxygenase (506 aa).

A helical transmembrane segment spans residues 5 to 25 (VLLAVAMVALIAVLSKLKSLL). C443 is a heme binding site.

It belongs to the cytochrome P450 family. Heme serves as cofactor.

The protein localises to the membrane. It carries out the reaction dolabradiene + reduced [NADPH--hemoprotein reductase] + O2 = 15,16-epoxydolabrene + oxidized [NADPH--hemoprotein reductase] + H2O + H(+). The catalysed reaction is 15,16-epoxydolabrene + reduced [NADPH--hemoprotein reductase] + O2 = 3beta-hydroxy-15,16-epoxydolabrene + oxidized [NADPH--hemoprotein reductase] + H2O + H(+). Functionally, involved in the production of antifungal dolabralexin phytoalexins in response to biotic and abiotic stresses. Catalyzes the epoxidation of dolabradiene at C-16, followed by hydroxylation at C-3, to yield the epoxides 15,16-epoxydolabrene (epoxydolabrene) and 3b-hydroxy-15,16-epoxydolabrene (epoxydolabranol). The sequence is that of Dolabradiene monooxygenase from Zea mays (Maize).